The primary structure comprises 261 residues: Chanoclavine-I dehydrogenase easD (261 aa).

The first 20 residues, 1–20, serve as a signal peptide directing secretion; that stretch reads MPSMTSKVFAITGGASGIGA. Ile-18 contacts NADP(+). N-linked (GlcNAc...) asparagine glycosylation occurs at Asn-43. Residues Asp-66, Arg-132, Tyr-166, Lys-170, and Thr-201 each contribute to the NADP(+) site. Tyr-166 functions as the Proton donor in the catalytic mechanism. Residue Lys-170 is the Lowers pKa of active site Tyr of the active site.

The protein belongs to the short-chain dehydrogenases/reductases (SDR) family. In terms of assembly, homotetramer.

It carries out the reaction chanoclavine-I + NAD(+) = chanoclavine-I aldehyde + NADH + H(+). It functions in the pathway alkaloid biosynthesis; ergot alkaloid biosynthesis. Chanoclavine-I dehydrogenase; part of the gene cluster that mediates the biosynthesis of fungal ergot alkaloid. DmaW catalyzes the first step of ergot alkaloid biosynthesis by condensing dimethylallyl diphosphate (DMAP) and tryptophan to form 4-dimethylallyl-L-tryptophan. The second step is catalyzed by the methyltransferase easF that methylates 4-dimethylallyl-L-tryptophan in the presence of S-adenosyl-L-methionine, resulting in the formation of 4-dimethylallyl-L-abrine. The catalase easC and the FAD-dependent oxidoreductase easE then transform 4-dimethylallyl-L-abrine to chanoclavine-I which is further oxidized by easD in the presence of NAD(+), resulting in the formation of chanoclavine-I aldehyde. Agroclavine dehydrogenase easG then mediates the conversion of chanoclavine-I aldehyde to agroclavine via a non-enzymatic adduct reaction: the substrate is an iminium intermediate that is formed spontaneously from chanoclavine-I aldehyde in the presence of glutathione. The presence of easA is not required to complete this reaction. Further conversion of agroclavine to paspalic acid is a two-step process involving oxidation of agroclavine to elymoclavine and of elymoclavine to paspalic acid, the second step being performed by the elymoclavine oxidase cloA. Paspalic acid is then further converted to D-lysergic acid. Ergopeptines are assembled from D-lysergic acid and three different amino acids by the D-lysergyl-peptide-synthetases composed each of a monomudular and a trimodular nonribosomal peptide synthetase subunit. LpsB and lpsC encode the monomodular subunits responsible for D-lysergic acid activation and incorporation into the ergopeptine backbone. LpsA1 and A2 subunits encode the trimodular nonribosomal peptide synthetase assembling the tripeptide portion of ergopeptines. LpsA1 is responsible for formation of the major ergopeptine, ergotamine, and lpsA2 for alpha-ergocryptine, the minor ergopeptine of the total alkaloid mixture elaborated by C.purpurea. D-lysergyl-tripeptides are assembled by the nonribosomal peptide synthetases and released as N-(D-lysergyl-aminoacyl)-lactams. Cyclolization of the D-lysergyl-tripeptides is performed by the Fe(2+)/2-ketoglutarate-dependent dioxygenase easH which introduces a hydroxyl group into N-(D-lysergyl-aminoacyl)-lactam at alpha-C of the aminoacyl residue followed by spontaneous condensation with the terminal lactam carbonyl group. The polypeptide is Chanoclavine-I dehydrogenase easD (Claviceps purpurea (strain 20.1) (Ergot fungus)).